The primary structure comprises 500 residues: Protein nucleotidyltransferase YdiU (500 aa).

ATP is bound by residues glycine 96, glycine 98, arginine 99, lysine 119, aspartate 131, glycine 132, arginine 182, and arginine 189. Aspartate 258 serves as the catalytic Proton acceptor. The Mg(2+) site is built by asparagine 259 and aspartate 268. Aspartate 268 is an ATP binding site.

It belongs to the SELO family. Mg(2+) is required as a cofactor. It depends on Mn(2+) as a cofactor.

It catalyses the reaction L-seryl-[protein] + ATP = 3-O-(5'-adenylyl)-L-seryl-[protein] + diphosphate. It carries out the reaction L-threonyl-[protein] + ATP = 3-O-(5'-adenylyl)-L-threonyl-[protein] + diphosphate. The enzyme catalyses L-tyrosyl-[protein] + ATP = O-(5'-adenylyl)-L-tyrosyl-[protein] + diphosphate. The catalysed reaction is L-histidyl-[protein] + UTP = N(tele)-(5'-uridylyl)-L-histidyl-[protein] + diphosphate. It catalyses the reaction L-seryl-[protein] + UTP = O-(5'-uridylyl)-L-seryl-[protein] + diphosphate. It carries out the reaction L-tyrosyl-[protein] + UTP = O-(5'-uridylyl)-L-tyrosyl-[protein] + diphosphate. Its function is as follows. Nucleotidyltransferase involved in the post-translational modification of proteins. It can catalyze the addition of adenosine monophosphate (AMP) or uridine monophosphate (UMP) to a protein, resulting in modifications known as AMPylation and UMPylation. In Rhizobium johnstonii (strain DSM 114642 / LMG 32736 / 3841) (Rhizobium leguminosarum bv. viciae), this protein is Protein nucleotidyltransferase YdiU.